A 290-amino-acid polypeptide reads, in one-letter code: UPF0750 membrane protein YdeO (290 aa).

The next 5 membrane-spanning stretches (helical) occupy residues Ile-18–Pro-38, Leu-56–Gly-76, Ser-83–His-103, Asp-112–Leu-132, and Leu-165–Ile-185.

The protein belongs to the UPF0750 family.

The protein resides in the cell membrane. The sequence is that of UPF0750 membrane protein YdeO (ydeO) from Bacillus subtilis (strain 168).